Consider the following 232-residue polypeptide: Triggering receptor expressed on myeloid cells 1 (232 aa).

Positions 1 to 20 (MRKAGVWGLLWMLFIEEIQA) are cleaved as a signal peptide. Residues 21 to 125 (AAEVFEEKCT…DPIILFHPVR (105 aa)) enclose the Ig-like V-type domain. The Extracellular portion of the chain corresponds to 21-203 (AAEVFEEKCT…THVNRAPGIS (183 aa)). The cysteines at positions 41 and 109 are disulfide-linked. The tract at residues 152–186 (PLPVTTKLRPRPRPRPKPVTQPIPTSADRLSSPGF) is disordered. The N-linked (GlcNAc...) asparagine glycan is linked to N192. Residues 204-224 (IIIPAACGLLSKTLVFIGLFA) form a helical membrane-spanning segment. Topologically, residues 225 to 232 (VTHRSFAS) are cytoplasmic.

In terms of assembly, monomer. Homomultimer; when activated. Interacts with TYROBP/DAP12. Interacts with TLR4. Detected in bone marrow, tongue, lung, liver, thymus, spleen, jejunum, ileum and lymph nodes.

It localises to the cell membrane. Cell surface receptor that plays important roles in innate and adaptive immunity by amplifying inflammatory responses. Upon activation by various ligands such as PGLYRP1, HMGB1 or HSP70, multimerizes and forms a complex with transmembrane adapter TYROBP/DAP12. In turn, initiates a SYK-mediated cascade of tyrosine phosphorylation, activating multiple downstream mediators such as BTK, MAPK1, MAPK3 or phospholipase C-gamma. This cascade promotes the neutrophil- and macrophage-mediated release of pro-inflammatory cytokines and/or chemokines, as well as their migration and thereby amplifies inflammatory responses that are triggered by bacterial and fungal infections. By also promoting the amplification of inflammatory signals that are initially triggered by Toll-like receptor (TLR) and NOD-like receptor engagement, plays a major role in the pathophysiology of acute and chronic inflammatory diseases of different etiologies including septic shock and atherosclerosis. The sequence is that of Triggering receptor expressed on myeloid cells 1 (TREM1) from Bos taurus (Bovine).